A 610-amino-acid polypeptide reads, in one-letter code: DNA-directed RNA polymerase III subunit RPC3 (610 aa).

The leucine-zipper stretch occupies residues 538–559 (LVYNMAEIVRNIQNFKMENKIL).

This sequence belongs to the RNA polymerase beta chain family. In terms of assembly, component of the RNA polymerase III (Pol III) complex consisting of 17 subunits.

It is found in the nucleus. DNA-dependent RNA polymerase catalyzes the transcription of DNA into RNA using the four ribonucleoside triphosphates as substrates. Specific core component of RNA polymerase III which synthesizes small RNAs, such as 5S rRNA and tRNAs. The chain is DNA-directed RNA polymerase III subunit RPC3 (RPC82) from Lodderomyces elongisporus (strain ATCC 11503 / CBS 2605 / JCM 1781 / NBRC 1676 / NRRL YB-4239) (Yeast).